Here is a 159-residue protein sequence, read N- to C-terminus: Small ribosomal subunit protein uS9 (159 aa).

Belongs to the universal ribosomal protein uS9 family.

The protein is Small ribosomal subunit protein uS9 of Methylocella silvestris (strain DSM 15510 / CIP 108128 / LMG 27833 / NCIMB 13906 / BL2).